A 500-amino-acid chain; its full sequence is Probable lipoprotein aminopeptidase LpqL (500 aa).

The first 24 residues, 1–24, serve as a signal peptide directing secretion; sequence MVNKSRMMPAVLAVAVVVAFLTTG. Residue cysteine 25 is the site of N-palmitoyl cysteine attachment. Cysteine 25 carries S-diacylglycerol cysteine lipidation. The PA domain occupies 140-231; it reads VTGPLVAAPA…VTKSVGFQLR (92 aa). Zn(2+)-binding residues include histidine 271 and aspartate 283. Glutamate 316 serves as the catalytic Proton acceptor. Residues glutamate 317, aspartate 345, and histidine 448 each coordinate Zn(2+).

The protein belongs to the peptidase M28 family. M28A subfamily. Zn(2+) is required as a cofactor. In terms of processing, modified by Lgt on Cys-25 with an S-linked diacylglycerol with a mixture of C16 and C19 fatty acids (palmitic and tuberculostearic acid), signal peptide is removed by LspA, modified by Lnt with an amide-linked mixture of C16 and C19 fatty acids, expressed in M.bovis.

The protein resides in the cell membrane. It catalyses the reaction Release of an N-terminal amino acid, Xaa-|-Yaa-, in which Xaa is preferably Leu, but may be other amino acids including Pro although not Arg or Lys, and Yaa may be Pro. Amino acid amides and methyl esters are also readily hydrolyzed, but rates on arylamides are exceedingly low.. In terms of biological role, an aminopeptidase; acts on free N-terminal amino groups with a very strong preference for Leu in the first position. This chain is Probable lipoprotein aminopeptidase LpqL (lpqL), found in Mycobacterium tuberculosis (strain ATCC 25618 / H37Rv).